The primary structure comprises 521 residues: GMP synthase [glutamine-hydrolyzing] (521 aa).

A Glutamine amidotransferase type-1 domain is found at 8–203 (KILILDFGAQ…VVDICGCQTL (196 aa)). The active-site Nucleophile is the C85. Catalysis depends on residues H177 and E179. The GMPS ATP-PPase domain occupies 204-396 (WTAANIIDDQ…LGLPRTMVYR (193 aa)). An ATP-binding site is contributed by 231–237 (SGGVDSS).

Homodimer.

The enzyme catalyses XMP + L-glutamine + ATP + H2O = GMP + L-glutamate + AMP + diphosphate + 2 H(+). The protein operates within purine metabolism; GMP biosynthesis; GMP from XMP (L-Gln route): step 1/1. Catalyzes the synthesis of GMP from XMP. The polypeptide is GMP synthase [glutamine-hydrolyzing] (Xanthomonas oryzae pv. oryzae (strain PXO99A)).